Here is a 184-residue protein sequence, read N- to C-terminus: Lipocalin-15 (184 aa).

Positions 1 to 20 (MMSFLLGAILTLLWAPTAQA) are cleaved as a signal peptide. Cysteines 83 and 176 form a disulfide.

This sequence belongs to the calycin superfamily. Lipocalin family.

Its subcellular location is the secreted. The sequence is that of Lipocalin-15 (LCN15) from Homo sapiens (Human).